Reading from the N-terminus, the 159-residue chain is 2-C-methyl-D-erythritol 2,4-cyclodiphosphate synthase (159 aa).

Residues Asp-10 and His-12 each coordinate a divalent metal cation. Residues Asp-10 to His-12 and His-36 to Ser-37 contribute to the 4-CDP-2-C-methyl-D-erythritol 2-phosphate site. A divalent metal cation is bound at residue His-44. 4-CDP-2-C-methyl-D-erythritol 2-phosphate-binding positions include Asp-58–Gly-60, Thr-134–Glu-137, Phe-141, and Arg-144.

Belongs to the IspF family. In terms of assembly, homotrimer. The cofactor is a divalent metal cation.

The enzyme catalyses 4-CDP-2-C-methyl-D-erythritol 2-phosphate = 2-C-methyl-D-erythritol 2,4-cyclic diphosphate + CMP. It participates in isoprenoid biosynthesis; isopentenyl diphosphate biosynthesis via DXP pathway; isopentenyl diphosphate from 1-deoxy-D-xylulose 5-phosphate: step 4/6. Involved in the biosynthesis of isopentenyl diphosphate (IPP) and dimethylallyl diphosphate (DMAPP), two major building blocks of isoprenoid compounds. Catalyzes the conversion of 4-diphosphocytidyl-2-C-methyl-D-erythritol 2-phosphate (CDP-ME2P) to 2-C-methyl-D-erythritol 2,4-cyclodiphosphate (ME-CPP) with a corresponding release of cytidine 5-monophosphate (CMP). The polypeptide is 2-C-methyl-D-erythritol 2,4-cyclodiphosphate synthase (Cereibacter sphaeroides (strain ATCC 17025 / ATH 2.4.3) (Rhodobacter sphaeroides)).